A 103-amino-acid chain; its full sequence is UPF0235 protein Rleg2_3707 (103 aa).

It belongs to the UPF0235 family.

The polypeptide is UPF0235 protein Rleg2_3707 (Rhizobium leguminosarum bv. trifolii (strain WSM2304)).